The chain runs to 164 residues: Interleukin-36 beta (164 aa).

The propeptide occupies 1-4; the sequence is MNPQ.

Belongs to the IL-1 family. In terms of assembly, interacts with cargo receptor TMED10; the interaction mediates the translocation from the cytoplasm into the ERGIC (endoplasmic reticulum-Golgi intermediate compartment) and thereby secretion. Post-translationally, N-terminal truncation leads to a dramatic enhancement of its activity (&gt;1000-fold). Expression at low levels in tonsil, bone marrow, heart, placenta, lung, testis and colon but not in any hematopoietic cell lines. Not detected in adipose tissue. Expressed at higher levels in psoriatic plaques than in symptomless psoriatic skin or healthy control skin. Increased levels are not detected in inflamed joint tissue.

It is found in the cytoplasm. The protein localises to the secreted. Functionally, cytokine that binds to and signals through the IL1RL2/IL-36R receptor which in turn activates NF-kappa-B and MAPK signaling pathways in target cells linked to a pro-inflammatory response. Part of the IL-36 signaling system that is thought to be present in epithelial barriers and to take part in local inflammatory response; similar to the IL-1 system with which it shares the coreceptor IL1RAP. Stimulates production of interleukin-6 and interleukin-8 in synovial fibrobasts, articular chondrocytes and mature adipocytes. Induces expression of a number of antimicrobial peptides including beta-defensins 4 and 103 as well as a number of matrix metalloproteases. Seems to be involved in skin inflammatory response by acting on keratinocytes, dendritic cells and indirectly on T-cells to drive tissue infiltration, cell maturation and cell proliferation. In cultured keratinocytes induces the expression of macrophage, T-cell, and neutrophil chemokines, such as CCL3, CCL4, CCL5, CCL2, CCL17, CCL22, CL20, CCL5, CCL2, CCL17, CCL22, CXCL8, CCL20 and CXCL1, and the production of pro-inflammatory cytokines such as TNF-alpha, IL-8 and IL-6. In Homo sapiens (Human), this protein is Interleukin-36 beta.